Here is a 378-residue protein sequence, read N- to C-terminus: Outer membrane protein (378 aa).

Positions 1 to 22 (MRLRTALLATTLMAAAPVAANA) are cleaved as a signal peptide. The OmpA-like domain maps to 258–378 (PPAPTPARTY…QNRRVEIILH (121 aa)).

The protein resides in the cell outer membrane. In terms of biological role, growth enhancer. This Gluconacetobacter diazotrophicus (strain ATCC 49037 / DSM 5601 / CCUG 37298 / CIP 103539 / LMG 7603 / PAl5) protein is Outer membrane protein.